The following is a 117-amino-acid chain: MSESPSANISDADKSAITPTTGDTSQQDVKPSTEHINLKVVGQDNNEVFFKIKKTTEFSKLMKIYCARQGKSMNSLRFLVDGERIRPDQTPAELDMEDGDQIEAVLEQLGGCTHLCL.

Residues 1–37 (MSESPSANISDADKSAITPTTGDTSQQDVKPSTEHIN) form a disordered region. The segment covering 17–30 (ITPTTGDTSQQDVK) has biased composition (polar residues). One can recognise a Ubiquitin-like domain in the interval 35–115 (HINLKVVGQD…LEQLGGCTHL (81 aa)). A Glycyl lysine isopeptide (Gly-Lys) (interchain with K-? in acceptor proteins) cross-link involves residue Gly-111. A propeptide spanning residues 112-117 (CTHLCL) is cleaved from the precursor.

Belongs to the ubiquitin family. SUMO subfamily. As to quaternary structure, interacts with rfp1.

The protein localises to the nucleus. Required for chromosome segregation where it may be involved in microtubule assembly. Loss of smt3 leads to an increase in telomere length. The polypeptide is Ubiquitin-like protein pmt3/smt3 (pmt3) (Schizosaccharomyces pombe (strain 972 / ATCC 24843) (Fission yeast)).